Reading from the N-terminus, the 255-residue chain is tRNA uridine(34) hydroxylase (255 aa).

The Rhodanese domain maps to 125–219; that stretch reads AAPDTLLIDT…YLEGIPESES (95 aa). Cysteine 179 acts as the Cysteine persulfide intermediate in catalysis.

The protein belongs to the TrhO family.

It carries out the reaction uridine(34) in tRNA + AH2 + O2 = 5-hydroxyuridine(34) in tRNA + A + H2O. In terms of biological role, catalyzes oxygen-dependent 5-hydroxyuridine (ho5U) modification at position 34 in tRNAs. This Nitrobacter hamburgensis (strain DSM 10229 / NCIMB 13809 / X14) protein is tRNA uridine(34) hydroxylase.